A 247-amino-acid chain; its full sequence is tRNA pseudouridine synthase A (247 aa).

Aspartate 52 serves as the catalytic Nucleophile. Position 111 (tyrosine 111) interacts with substrate.

It belongs to the tRNA pseudouridine synthase TruA family. In terms of assembly, homodimer.

It catalyses the reaction uridine(38/39/40) in tRNA = pseudouridine(38/39/40) in tRNA. In terms of biological role, formation of pseudouridine at positions 38, 39 and 40 in the anticodon stem and loop of transfer RNAs. This Erythrobacter litoralis (strain HTCC2594) protein is tRNA pseudouridine synthase A.